A 729-amino-acid chain; its full sequence is Cytoplasmic polyadenylation element-binding protein 4 (729 aa).

Disordered regions lie at residues Phe-20–Ala-50 and Glu-78–Leu-133. Over residues Phe-24–Gln-35 the composition is skewed to basic residues. Over residues Gln-83–Leu-96 the composition is skewed to low complexity. A phosphoserine mark is found at Ser-97, Ser-99, and Ser-137. The segment at Phe-218–Gly-324 is disordered. Over residues His-232 to Gln-249 the composition is skewed to basic residues. Residues Ser-252 and Ser-255 each carry the phosphoserine modification. Low complexity predominate over residues Trp-285–Ser-300. The segment covering Pro-301–Ala-311 has biased composition (gly residues). A Phosphothreonine modification is found at Thr-326. Residues Ser-330 and Ser-332 each carry the phosphoserine modification. 2 consecutive RRM domains span residues Arg-472 to Leu-563 and Lys-580 to Leu-662. The segment at Lys-541–Tyr-543 is RNA-binding. Zn(2+) contacts are provided by Cys-667, Cys-675, Cys-684, Cys-689, Cys-694, Cys-697, His-702, and His-710.

The protein belongs to the RRM CPEB family. In terms of assembly, interacts with TOB1. In terms of tissue distribution, highly expressed in brain, including hippocampus, amygdala, granule and Purkinje cells of the cerebellum (at protein level). Expressed in spinal cord (at protein level). Expressed in kidney, lung and heart (at protein level). Expressed in liver (at protein level). Expressed in spleen and testis (at protein level). Weakly expressed in ovary and in granular cells of dentate gyrus and the pyramidal cells of CA3 and CA1 of the hippocampus.

It localises to the cytoplasm. The protein localises to the cell projection. The protein resides in the dendrite. It is found in the dendritic spine. Its subcellular location is the postsynaptic density. It localises to the axon. The protein localises to the growth cone. The protein resides in the endoplasmic reticulum. It is found in the perinuclear region. Its function is as follows. Sequence-specific RNA-binding protein that binds to the cytoplasmic polyadenylation element (CPE), an uridine-rich sequence element (consensus sequence 5'-UUUUUAU-3') within the mRNA 3'-UTR. RNA binding results in a clear conformational change analogous to the Venus fly trap mechanism. Regulates activation of unfolded protein response (UPR) in the process of adaptation to ER stress in liver, by maintaining translation of CPE-regulated mRNAs in conditions in which global protein synthesis is inhibited. Required for cell cycle progression, specifically for cytokinesis and chromosomal segregation. Plays a role as an oncogene promoting tumor growth and progression by positively regulating translation of t-plasminogen activator/PLAT. Stimulates proliferation of melanocytes. In contrast to CPEB1 and CPEB3, does not play role in synaptic plasticity, learning and memory. The protein is Cytoplasmic polyadenylation element-binding protein 4 (Cpeb4) of Mus musculus (Mouse).